We begin with the raw amino-acid sequence, 156 residues long: Lipoprotein signal peptidase (156 aa).

A helical membrane pass occupies residues 62-82 (GNTVFMVLSAVIIAILSYTKI). Residues D115 and D133 contribute to the active site. A helical membrane pass occupies residues 126–146 (WPAFNLADLTITCGVIVFLAM).

Belongs to the peptidase A8 family.

It localises to the cell inner membrane. The catalysed reaction is Release of signal peptides from bacterial membrane prolipoproteins. Hydrolyzes -Xaa-Yaa-Zaa-|-(S,diacylglyceryl)Cys-, in which Xaa is hydrophobic (preferably Leu), and Yaa (Ala or Ser) and Zaa (Gly or Ala) have small, neutral side chains.. It participates in protein modification; lipoprotein biosynthesis (signal peptide cleavage). In terms of biological role, this protein specifically catalyzes the removal of signal peptides from prolipoproteins. This is Lipoprotein signal peptidase from Anaplasma phagocytophilum (strain HZ).